The primary structure comprises 375 residues: Chaperone protein DnaJ (375 aa).

Residues aspartate 5–glycine 70 form the J domain. The CR-type zinc finger occupies glycine 136–glutamate 214. Zn(2+)-binding residues include cysteine 149, cysteine 152, cysteine 166, cysteine 169, cysteine 188, cysteine 191, cysteine 202, and cysteine 205. 4 CXXCXGXG motif repeats span residues cysteine 149 to glycine 156, cysteine 166 to glycine 173, cysteine 188 to glycine 195, and cysteine 202 to glycine 209.

It belongs to the DnaJ family. As to quaternary structure, homodimer. It depends on Zn(2+) as a cofactor.

It localises to the cytoplasm. Its function is as follows. Participates actively in the response to hyperosmotic and heat shock by preventing the aggregation of stress-denatured proteins and by disaggregating proteins, also in an autonomous, DnaK-independent fashion. Unfolded proteins bind initially to DnaJ; upon interaction with the DnaJ-bound protein, DnaK hydrolyzes its bound ATP, resulting in the formation of a stable complex. GrpE releases ADP from DnaK; ATP binding to DnaK triggers the release of the substrate protein, thus completing the reaction cycle. Several rounds of ATP-dependent interactions between DnaJ, DnaK and GrpE are required for fully efficient folding. Also involved, together with DnaK and GrpE, in the DNA replication of plasmids through activation of initiation proteins. This Rhizobium etli (strain ATCC 51251 / DSM 11541 / JCM 21823 / NBRC 15573 / CFN 42) protein is Chaperone protein DnaJ.